The sequence spans 940 residues: MSDYKFTLNLPETEFPMRGNLANREPEMLERWTKDGLYQQIRDSRIGRTPFILHDGPPYANGSIHIGHSVNKILKDIIVKSKTMSGFDAPYVPGWDCHGLPIELKVEQKVGKPGQKISAAEFREECRKYAAEQVNGQREDFIRLGVLGDWQNPYLTMDFSTEANIVRSLSKVIESGHLHKGVKPVHWCTDCGSALAEAEVEYEDKTSPAIDVAFVAADSKAVAAKFGVSDYSHPVSMVIWTTTPWTLPANRALSLSPELDYSLVEFEKDGVTQALILAEVLVESCLTRYNVESHTVLGSAKGAAFELVRFNHPFLDFDVPAILGDHVTTDAGTGIVHTAPGHGQDDFVVGQKYGLEVANPVGDNGVYKPDTEYFAGQHVFKANDNVVALLREKSALLNHVAYRHSYPHCWRHKTPIIFRATPQWFISMDNHGLRTQALKEIEQTQWIPDWGQSRIEKMVENRPDWCISRQRTWGVPITLFVNRETEELHPDSVSLMERVASRIEQQGIQAWWDLDAAELLGDEAEQYRKVTDTLDVWFDSGSTFSSVVAARPEFHGHGVDLYLEGSDQHRGWFMSSLMISTAMNGKAPYKQVLTHGFTVDGKGRKMSKSIGNVIAPQTVTNKLGADILRLWVAATDYSGEMTVSDEILNRSADAYRRIRNTARFLLANLNGFEPAKDLVAVEDMVALDRWVVRRAAALQQEIIEAYEQYNFHIVTQKLMQFCSVELGSFYLDIIKDRQYTAKQEGHARRSCQSALYLISEAMVRWIAPILSFTADEVWQLLPGERDAYVFTQEWYQGLKSVTLATDLSDDYWQQLLTVRNEVNKVIEQARRDKRIGGSLEAEVTLFADAALTEQLTHIGDELRFVLLTSEAKVLPLADATSEAVETELASLKLLVASSTAEKCERCWHHREEVGTIEAHPTLCTRCVTNIEGDGEVRLFA.

Positions 58-68 (PYANGSIHIGH) match the 'HIGH' region motif. Glutamate 564 lines the L-isoleucyl-5'-AMP pocket. The 'KMSKS' region signature appears at 605–609 (KMSKS). Lysine 608 provides a ligand contact to ATP. Zn(2+)-binding residues include cysteine 903, cysteine 906, cysteine 923, and cysteine 926.

It belongs to the class-I aminoacyl-tRNA synthetase family. IleS type 1 subfamily. Monomer. It depends on Zn(2+) as a cofactor.

Its subcellular location is the cytoplasm. It carries out the reaction tRNA(Ile) + L-isoleucine + ATP = L-isoleucyl-tRNA(Ile) + AMP + diphosphate. Catalyzes the attachment of isoleucine to tRNA(Ile). As IleRS can inadvertently accommodate and process structurally similar amino acids such as valine, to avoid such errors it has two additional distinct tRNA(Ile)-dependent editing activities. One activity is designated as 'pretransfer' editing and involves the hydrolysis of activated Val-AMP. The other activity is designated 'posttransfer' editing and involves deacylation of mischarged Val-tRNA(Ile). This Shewanella baltica (strain OS155 / ATCC BAA-1091) protein is Isoleucine--tRNA ligase.